The chain runs to 131 residues: Large-conductance mechanosensitive channel (131 aa).

The next 2 membrane-spanning stretches (helical) occupy residues 14–34 (VIDL…VTSL) and 67–87 (GSFI…FIFI).

The protein belongs to the MscL family. Homopentamer.

It localises to the cell membrane. Its function is as follows. Channel that opens in response to stretch forces in the membrane lipid bilayer. May participate in the regulation of osmotic pressure changes within the cell. This is Large-conductance mechanosensitive channel from Bacillus pumilus (strain SAFR-032).